The chain runs to 310 residues: Vomeronasal type-1 receptor 101 (310 aa).

Residues 1 to 19 lie on the Extracellular side of the membrane; sequence MNKVNILPSDTNMKITLFS. The chain crosses the membrane as a helical span at residues 20-40; it reads ELSVGISANSILFFAHLCMFF. At 41-49 the chain is on the cytoplasmic side; the sequence is EENRSKPID. Residues 50–70 traverse the membrane as a helical segment; the sequence is LCIAFLSLTQLMLLVTMGLIA. Topologically, residues 71–93 are extracellular; the sequence is ADMFMAQGIWDITTCRSLIYFHR. Cysteines 85 and 172 form a disulfide. Residues 94–114 traverse the membrane as a helical segment; sequence LLRGFNLCAACLLHILWTFTL. The Cytoplasmic portion of the chain corresponds to 115-134; sequence SPRSSCLTKFKHKSPHHISG. The helical transmembrane segment at 135 to 155 threads the bilayer; that stretch reads AYLFFCVLYMSFSSHLFVLVI. Residues 156–193 are Extracellular-facing; the sequence is ATSNLTSDHFMYVTQSCSLLPMSYSRTSTFSLLMVTRE. An N-linked (GlcNAc...) asparagine glycan is attached at Asn-159. The helical transmembrane segment at 194-214 threads the bilayer; sequence VFLISLMALSSGYMVTLLWRH. At 215–238 the chain is on the cytoplasmic side; the sequence is KKQAQHLHSTRLSSKASPQQRATR. A helical transmembrane segment spans residues 239-259; that stretch reads TILLLMTFFVVFYILGTVIFH. Residues 260–268 lie on the Extracellular side of the membrane; sequence SRTKFKDGS. A helical membrane pass occupies residues 269–289; that stretch reads IFYCVQIIVSHSYATISPFVF. At 290 to 310 the chain is on the cytoplasmic side; it reads VFSEKRIIKFFRSMCGRIVNT.

It belongs to the G-protein coupled receptor 1 family. Expressed in 1-4% of neurons of the vomeronasal organ. Only one pheromone receptor gene may be expressed in a particular neuron. Not expressed in the main olfactory epithelium.

The protein localises to the cell membrane. Putative pheromone receptor implicated in the regulation of social as well as reproductive behavior. This is Vomeronasal type-1 receptor 101 (Vom1r101) from Rattus norvegicus (Rat).